Consider the following 989-residue polypeptide: MASNNVAQFAAELKMPAGVLLEQLQAAGVTKASEDDSLSETDKARLLDHLRKSHGSTDADKRKITLTKRHTSEIKQSDATGKARTIQVEVRKKRTFVRRDETSAENGDASNHVAEAEVDDLELQRREEEARHEAELLEKQAQELKARQEQLEREEAERQAREAAAEVERRRAEEEAAKKRAAAAAEAAAREQQTQASKPAQAAQPAAAKAEPVAAKAAEPVVARQSEQDDERAAAERAAQREAAKKAEDAARQAAEKARAEQEEIAKRRAAAEAEARAIREMMNTPRKAQVKAPEPAPKPAEPAKAAEAKGTLHKPARPAGEAPARPAAKKPAAAAPAATTTPSAGDKKKPGGGKGGWQDDAAKRRGIKTRGDTSGGVDRGWRGGPKGRGKHQDQNTTFQAPTEPIVREVHVPETITVADLAHKMAVKASEVIKSMMKLGQMVTINQMLDQETAMIIVEELGHHAVAAKLDDPEAMLVEGEVSDAESLPRPPVVTVMGHVDHGKTSLLDYIRRAKVAAGEAGGITQHIGAYHVETPRGVITFLDTPGHEAFTAMRARGAKATDIVILVVAADDGVMPQTKEAIAHAKAGGVPLVVAINKIDKPDANPERVKQELVAEGVVPEEYGGDSPFVSVSAKTGAGIDDLLENVLLQAEVLELKAPVEAPAKGLVIEAKLDKGKGPVATILVQSGTLNRGDVVLAGSAYGRVRAMLDETGKPTKSAGPSIPVEIQGLSEVPQAGEEVIVMPDERKAREVALFRQGKFRDVKLAKQQAAKLENMLEQMGEGEVQYMPLIVKADVQGSQEALVQSLLKLSTDEVRVQIVHGAVGGISESDVNLATASKAVIIGFNTRADAQARKLAEANGVDIRYYNIIYDAVDDVKAAMSGMLAPEKREVVTGTVEVRQVFKVPKIGAVAGCMVTDGFVKRSSSVRVLRNNVVIFTGELDSLKRFKDDVKEVRQGFECGMSIKNFNDIVEGDQFEVFEVTEVARSL.

Disordered regions lie at residues 28 to 60 and 97 to 397; these read GVTKASEDDSLSETDKARLLDHLRKSHGSTDAD and VRRD…DQNT. Composition is skewed to basic and acidic residues over residues 40 to 60 and 122 to 178; these read ETDKARLLDHLRKSHGSTDAD and ELQR…EAAK. Positions 182–223 are enriched in low complexity; that stretch reads AAAAEAAAREQQTQASKPAQAAQPAAAKAEPVAAKAAEPVVA. Basic and acidic residues predominate over residues 231–280; the sequence is ERAAAERAAQREAAKKAEDAARQAAEKARAEQEEIAKRRAAAEAEARAIR. Over residues 318 to 345 the composition is skewed to low complexity; sequence RPAGEAPARPAAKKPAAAAPAATTTPSA. Positions 374–387 are enriched in gly residues; sequence TSGGVDRGWRGGPK. The tr-type G domain occupies 489–658; sequence PRPPVVTVMG…LLQAEVLELK (170 aa). Residues 498 to 505 are G1; sequence GHVDHGKT. Residue 498–505 coordinates GTP; sequence GHVDHGKT. The interval 523–527 is G2; it reads GITQH. The interval 544-547 is G3; that stretch reads DTPG. Residues 544–548 and 598–601 each bind GTP; these read DTPGH and NKID. Residues 598–601 are G4; sequence NKID. Residues 634-636 form a G5 region; the sequence is SAK.

This sequence belongs to the TRAFAC class translation factor GTPase superfamily. Classic translation factor GTPase family. IF-2 subfamily.

The protein resides in the cytoplasm. Functionally, one of the essential components for the initiation of protein synthesis. Protects formylmethionyl-tRNA from spontaneous hydrolysis and promotes its binding to the 30S ribosomal subunits. Also involved in the hydrolysis of GTP during the formation of the 70S ribosomal complex. The chain is Translation initiation factor IF-2 from Paraburkholderia xenovorans (strain LB400).